A 499-amino-acid chain; its full sequence is Glycerol kinase (499 aa).

ADP is bound at residue Thr-12. ATP is bound by residues Thr-12, Thr-13, and Ser-14. Thr-12 contacts sn-glycerol 3-phosphate. Arg-16 contributes to the ADP binding site. Residues Arg-82, Glu-83, Tyr-134, and Asp-245 each contribute to the sn-glycerol 3-phosphate site. Arg-82, Glu-83, Tyr-134, Asp-245, and Gln-246 together coordinate glycerol. Residues Thr-267 and Gly-311 each coordinate ADP. Positions 267, 311, 315, and 412 each coordinate ATP. ADP contacts are provided by Gly-412 and Asn-416.

The protein belongs to the FGGY kinase family.

The catalysed reaction is glycerol + ATP = sn-glycerol 3-phosphate + ADP + H(+). It functions in the pathway polyol metabolism; glycerol degradation via glycerol kinase pathway; sn-glycerol 3-phosphate from glycerol: step 1/1. Its activity is regulated as follows. Inhibited by fructose 1,6-bisphosphate (FBP). Its function is as follows. Key enzyme in the regulation of glycerol uptake and metabolism. Catalyzes the phosphorylation of glycerol to yield sn-glycerol 3-phosphate. The chain is Glycerol kinase from Acidiphilium cryptum (strain JF-5).